The following is a 246-amino-acid chain: Protein phosphatase PhpP (246 aa).

The PPM-type phosphatase domain occupies 2–240 (EISLLTDVGQ…DNITVALVSM (239 aa)). The Mn(2+) site is built by aspartate 36, glycine 37, aspartate 192, and aspartate 231.

It belongs to the PP2C family. Requires Mn(2+) as cofactor.

The protein resides in the cytoplasm. It carries out the reaction O-phospho-L-seryl-[protein] + H2O = L-seryl-[protein] + phosphate. The catalysed reaction is O-phospho-L-threonyl-[protein] + H2O = L-threonyl-[protein] + phosphate. Its function is as follows. Protein phosphatase able to dephosphorylate StkP-P and other phosphorylated protein substrates. PhpP and its cognate protein kinase StkP appear to constitute a functional signaling couple in vivo, PhpP's primary role being probably to control phosphorylation levels of StkP and of its targets. PhpP thus performs an essential control of StkP activity. Also dephosphorylates DivIVA in vivo. In Streptococcus pneumoniae serotype 2 (strain D39 / NCTC 7466), this protein is Protein phosphatase PhpP (phpP).